Reading from the N-terminus, the 272-residue chain is Orotidine 5'-phosphate decarboxylase (272 aa).

K95 serves as the catalytic Proton donor.

The protein belongs to the OMP decarboxylase family. Type 2 subfamily.

It carries out the reaction orotidine 5'-phosphate + H(+) = UMP + CO2. Its pathway is pyrimidine metabolism; UMP biosynthesis via de novo pathway; UMP from orotate: step 2/2. The polypeptide is Orotidine 5'-phosphate decarboxylase (Cupriavidus taiwanensis (strain DSM 17343 / BCRC 17206 / CCUG 44338 / CIP 107171 / LMG 19424 / R1) (Ralstonia taiwanensis (strain LMG 19424))).